The following is a 468-amino-acid chain: 3-isopropylmalate dehydratase large subunit (468 aa).

Positions 349, 409, and 412 each coordinate [4Fe-4S] cluster.

It belongs to the aconitase/IPM isomerase family. LeuC type 1 subfamily. In terms of assembly, heterodimer of LeuC and LeuD. The cofactor is [4Fe-4S] cluster.

The catalysed reaction is (2R,3S)-3-isopropylmalate = (2S)-2-isopropylmalate. The protein operates within amino-acid biosynthesis; L-leucine biosynthesis; L-leucine from 3-methyl-2-oxobutanoate: step 2/4. In terms of biological role, catalyzes the isomerization between 2-isopropylmalate and 3-isopropylmalate, via the formation of 2-isopropylmaleate. The chain is 3-isopropylmalate dehydratase large subunit from Ruegeria pomeroyi (strain ATCC 700808 / DSM 15171 / DSS-3) (Silicibacter pomeroyi).